The primary structure comprises 159 residues: Phosphopantetheine adenylyltransferase (159 aa).

T10 contributes to the substrate binding site. ATP is bound by residues 10 to 11 (TF) and H18. Substrate is bound by residues K42, M74, and R88. Residues 89-91 (GLR), E99, and 124-130 (WSFISSS) each bind ATP.

It belongs to the bacterial CoaD family. Homohexamer. Mg(2+) is required as a cofactor.

It is found in the cytoplasm. The enzyme catalyses (R)-4'-phosphopantetheine + ATP + H(+) = 3'-dephospho-CoA + diphosphate. Its pathway is cofactor biosynthesis; coenzyme A biosynthesis; CoA from (R)-pantothenate: step 4/5. Reversibly transfers an adenylyl group from ATP to 4'-phosphopantetheine, yielding dephospho-CoA (dPCoA) and pyrophosphate. In Klebsiella pneumoniae (strain 342), this protein is Phosphopantetheine adenylyltransferase.